The chain runs to 84 residues: Small ribosomal subunit protein bS20 (84 aa).

The tract at residues 1–25 (MPVIKSAMKRVRTSEKAAARNRSQM) is disordered.

It belongs to the bacterial ribosomal protein bS20 family.

Functionally, binds directly to 16S ribosomal RNA. This chain is Small ribosomal subunit protein bS20, found in Pediococcus pentosaceus (strain ATCC 25745 / CCUG 21536 / LMG 10740 / 183-1w).